We begin with the raw amino-acid sequence, 388 residues long: Zinc finger C2H2 protein ECU10_0150 (388 aa).

The C2H2-type zinc-finger motif lies at 299 to 322 (YKCGFCGKAFESEKFIFNHFNNKH).

This is Zinc finger C2H2 protein ECU10_0150 from Encephalitozoon cuniculi (strain GB-M1) (Microsporidian parasite).